Consider the following 300-residue polypeptide: Ribosomal RNA small subunit methyltransferase H (300 aa).

Residues 46 to 48 (GGH), aspartate 65, phenylalanine 92, aspartate 107, and glutamine 114 contribute to the S-adenosyl-L-methionine site.

It belongs to the methyltransferase superfamily. RsmH family.

It is found in the cytoplasm. The catalysed reaction is cytidine(1402) in 16S rRNA + S-adenosyl-L-methionine = N(4)-methylcytidine(1402) in 16S rRNA + S-adenosyl-L-homocysteine + H(+). Specifically methylates the N4 position of cytidine in position 1402 (C1402) of 16S rRNA. The protein is Ribosomal RNA small subunit methyltransferase H of Prochlorococcus marinus (strain AS9601).